The chain runs to 407 residues: Phosphopentomutase (407 aa).

The Mn(2+) site is built by D10, D306, H311, D347, H348, and H359.

Belongs to the phosphopentomutase family. Mn(2+) is required as a cofactor.

It is found in the cytoplasm. The catalysed reaction is 2-deoxy-alpha-D-ribose 1-phosphate = 2-deoxy-D-ribose 5-phosphate. It catalyses the reaction alpha-D-ribose 1-phosphate = D-ribose 5-phosphate. It participates in carbohydrate degradation; 2-deoxy-D-ribose 1-phosphate degradation; D-glyceraldehyde 3-phosphate and acetaldehyde from 2-deoxy-alpha-D-ribose 1-phosphate: step 1/2. Functionally, isomerase that catalyzes the conversion of deoxy-ribose 1-phosphate (dRib-1-P) and ribose 1-phosphate (Rib-1-P) to deoxy-ribose 5-phosphate (dRib-5-P) and ribose 5-phosphate (Rib-5-P), respectively. This chain is Phosphopentomutase, found in Erwinia tasmaniensis (strain DSM 17950 / CFBP 7177 / CIP 109463 / NCPPB 4357 / Et1/99).